Here is a 191-residue protein sequence, read N- to C-terminus: MFDIGFSELFLILVIGLLVLGPKRLPVAIRTVMGWVATIRGLASNVQNELKQELKLQELQESIKKAEELNFQQLSPELSKTVEELKASAEKMRTALEQKAAATNTTLEEQIKEIKNATESTSQTLTEQLTPSEQVTEATTDDVLSPAEQAELAEENDEMVYIQQYYPDDDDEPVFASKVKPQTEEIQDKKA.

The helical transmembrane segment at 1–21 (MFDIGFSELFLILVIGLLVLG) threads the bilayer. A compositionally biased stretch (polar residues) spans 119–138 (ESTSQTLTEQLTPSEQVTEA). Disordered regions lie at residues 119-139 (ESTS…TEAT) and 168-191 (DDDD…DKKA). Residues 181 to 191 (PQTEEIQDKKA) show a composition bias toward basic and acidic residues.

It belongs to the TatB family. As to quaternary structure, the Tat system comprises two distinct complexes: a TatABC complex, containing multiple copies of TatA, TatB and TatC subunits, and a separate TatA complex, containing only TatA subunits. Substrates initially bind to the TatABC complex, which probably triggers association of the separate TatA complex to form the active translocon.

It is found in the cell inner membrane. Part of the twin-arginine translocation (Tat) system that transports large folded proteins containing a characteristic twin-arginine motif in their signal peptide across membranes. Together with TatC, TatB is part of a receptor directly interacting with Tat signal peptides. TatB may form an oligomeric binding site that transiently accommodates folded Tat precursor proteins before their translocation. The sequence is that of Sec-independent protein translocase protein TatB from Pasteurella multocida (strain Pm70).